The chain runs to 521 residues: AAA ATPase forming ring-shaped complexes (521 aa).

Positions 4–44 (TEDLAALNDRLMAKNHALAEALSRAGKELTKAKSQLAQLAQ) form a coiled coil. 235–240 (GNGKTM) contacts ATP.

Belongs to the AAA ATPase family. Homohexamer. Assembles into a hexameric ring structure.

The chain is AAA ATPase forming ring-shaped complexes from Bifidobacterium longum (strain NCC 2705).